Reading from the N-terminus, the 219-residue chain is DAN domain family member 5 (219 aa).

Positions 1–19 (MLLFRAASLLPLLCFTVGA) are cleaved as a signal peptide. Disulfide bonds link Cys118/Cys165, Cys132/Cys179, Cys142/Cys195, and Cys146/Cys197. The CTCK domain maps to 118-198 (CHALPFIQNV…VELVEECECE (81 aa)).

The protein belongs to the DAN family. Interacts with nr1-a.

The protein localises to the secreted. In terms of biological role, plays an important role in regulating the left-right axis by blocking a tgfb1 cascade in the right posterior paraxial mesoderm. Functions as an inhibitor of bmp, tgfb1, nodal, activin and wnt signaling in the ectoderm. May inhibit mesodermal signals, probably through an inhibition of nodal/activin pathways. Seems to regulates cell fate specification and competence before the onset of neural induction. Expression in the entire ectodermal region prior to gastrulation might act to prevent fate specification in the ectoderm and ensure the maintenance of the stem-cell-like properties exhibited by ectodermal cells. This Xenopus tropicalis (Western clawed frog) protein is DAN domain family member 5 (dand5).